The following is a 347-amino-acid chain: Homoisocitrate dehydrogenase (347 aa).

Residue 68 to 70 coordinates NADH; sequence ITS. (2R,3S)-homoisocitrate is bound at residue S70. Residue S81 is modified to Phosphoserine. Residues R87, R97, R128, Y135, K181, and N183 each coordinate (2R,3S)-homoisocitrate. NADH is bound at residue N183. The Mg(2+) site is built by D213, D237, and D241. NADH is bound by residues 270-274 and N282; that span reads GSAPD.

It belongs to the isocitrate and isopropylmalate dehydrogenases family. Requires Mg(2+) as cofactor.

The enzyme catalyses (2R,3S)-homoisocitrate + NAD(+) = 2-oxoadipate + CO2 + NADH. It catalyses the reaction (2R,3S)-iso(homo)2citrate + NAD(+) = 2-oxoheptanedioate + CO2 + NADH. It carries out the reaction (2R,3S)-iso(homo)3citrate + NAD(+) = 2-oxosuberate + CO2 + NADH. The protein operates within organic acid metabolism; 2-oxosuberate biosynthesis. Catalyzes the NAD-dependent oxidation and decarboxylation of (2R,3S)-homoisocitrate, (2R,3S)-homo(2)-isocitrate and (2R,3S)-homo(3)-isocitrate, into 2-oxoadipate, 2-oxopimelate (2-oxoheptanedioate), and 2-oxosuberate, respectively. All these substrates are intermediates in the biosynthesis of biotin and of 7-mercaptoheptanoate, a moiety of coenzyme B in methanoarchaea. Is also able to produce 2-oxoazelate from (2R,3S)-homo(4)-isocitrate in vitro, but this substrate is probably not physiologically relevant. Is unable to use any isomer of isocitrate or isopropylmalate as a substrate, and NADP as an oxidant. This Methanocaldococcus jannaschii (strain ATCC 43067 / DSM 2661 / JAL-1 / JCM 10045 / NBRC 100440) (Methanococcus jannaschii) protein is Homoisocitrate dehydrogenase (aksF).